The primary structure comprises 111 residues: Large ribosomal subunit protein uL24 (111 aa).

Belongs to the universal ribosomal protein uL24 family. As to quaternary structure, part of the 50S ribosomal subunit.

Its function is as follows. One of two assembly initiator proteins, it binds directly to the 5'-end of the 23S rRNA, where it nucleates assembly of the 50S subunit. Functionally, one of the proteins that surrounds the polypeptide exit tunnel on the outside of the subunit. This is Large ribosomal subunit protein uL24 from Cytophaga hutchinsonii (strain ATCC 33406 / DSM 1761 / CIP 103989 / NBRC 15051 / NCIMB 9469 / D465).